A 249-amino-acid chain; its full sequence is Probable transcriptional regulatory protein ERGA_CDS_03720 (249 aa).

Positions 1 to 21 (MAGHSQFANIKHRKGAQDAKR) are disordered.

Belongs to the TACO1 family.

Its subcellular location is the cytoplasm. In Ehrlichia ruminantium (strain Gardel), this protein is Probable transcriptional regulatory protein ERGA_CDS_03720.